We begin with the raw amino-acid sequence, 232 residues long: 7-cyano-7-deazaguanine synthase (232 aa).

Phenylalanine 8–leucine 18 lines the ATP pocket. Zn(2+) is bound by residues cysteine 189, cysteine 198, cysteine 201, and cysteine 204.

This sequence belongs to the QueC family. Zn(2+) is required as a cofactor.

The enzyme catalyses 7-carboxy-7-deazaguanine + NH4(+) + ATP = 7-cyano-7-deazaguanine + ADP + phosphate + H2O + H(+). It functions in the pathway purine metabolism; 7-cyano-7-deazaguanine biosynthesis. Its function is as follows. Catalyzes the ATP-dependent conversion of 7-carboxy-7-deazaguanine (CDG) to 7-cyano-7-deazaguanine (preQ(0)). The polypeptide is 7-cyano-7-deazaguanine synthase (Yersinia enterocolitica serotype O:8 / biotype 1B (strain NCTC 13174 / 8081)).